The chain runs to 371 residues: Histidinol-phosphate aminotransferase (371 aa).

Lysine 221 carries the post-translational modification N6-(pyridoxal phosphate)lysine.

The protein belongs to the class-II pyridoxal-phosphate-dependent aminotransferase family. Histidinol-phosphate aminotransferase subfamily. As to quaternary structure, homodimer. Pyridoxal 5'-phosphate serves as cofactor.

It catalyses the reaction L-histidinol phosphate + 2-oxoglutarate = 3-(imidazol-4-yl)-2-oxopropyl phosphate + L-glutamate. The protein operates within amino-acid biosynthesis; L-histidine biosynthesis; L-histidine from 5-phospho-alpha-D-ribose 1-diphosphate: step 7/9. This chain is Histidinol-phosphate aminotransferase, found in Pseudoalteromonas atlantica (strain T6c / ATCC BAA-1087).